A 345-amino-acid chain; its full sequence is Large ribosomal subunit protein uL4 (345 aa).

Alanine 2 is modified (N-acetylalanine).

This sequence belongs to the universal ribosomal protein uL4 family.

The protein is Large ribosomal subunit protein uL4 (rpl-4) of Caenorhabditis elegans.